We begin with the raw amino-acid sequence, 344 residues long: Angiopoietin-related protein 7 (344 aa).

Positions 1-26 (MLKKTLSAVAWLCIFLVAFVSHPVWP) are cleaved as a signal peptide. Positions 37–116 (ELTAATCCEE…IGIMQLQAAQ (80 aa)) form a coiled coil. Residue asparagine 56 is glycosylated (N-linked (GlcNAc...) asparagine). The region spanning 120 to 341 (QTSADAIYDC…RVEMKIRPED (222 aa)) is the Fibrinogen C-terminal domain. The cysteines at positions 129 and 160 are disulfide-linked. N-linked (GlcNAc...) asparagine glycosylation is found at asparagine 251 and asparagine 265. An intrachain disulfide couples cysteine 283 to cysteine 296.

In terms of assembly, homotetramer; disulfide-linked.

It localises to the secreted. Has a role in the formation and organization of the extracellular matrix. In the eye, it functions as a mediator of dexamethasone-induced matrix deposition in the trabecular meshwork, the tissue responsible for the outflow of the ocular aqueous humor and for the maintenance of intraocular pressure. Is a negative regulator of angiogenesis in the cornea, and plays a major role in maintaining corneal avascularity and transparency. This is Angiopoietin-related protein 7 (ANGPTL7) from Bos taurus (Bovine).